The following is a 215-amino-acid chain: 7-methyl-GTP pyrophosphatase (215 aa).

The active-site Proton acceptor is the D79.

It belongs to the Maf family. YceF subfamily. The cofactor is a divalent metal cation.

The protein localises to the cytoplasm. It carries out the reaction N(7)-methyl-GTP + H2O = N(7)-methyl-GMP + diphosphate + H(+). Functionally, nucleoside triphosphate pyrophosphatase that hydrolyzes 7-methyl-GTP (m(7)GTP). May have a dual role in cell division arrest and in preventing the incorporation of modified nucleotides into cellular nucleic acids. This Burkholderia mallei (strain ATCC 23344) protein is 7-methyl-GTP pyrophosphatase.